The following is a 214-amino-acid chain: Homologous-pairing protein 2 homolog (214 aa).

A coiled-coil region spans residues 79–147; sequence SDSELKDLDA…EHKLTNIKSA (69 aa). The segment at 115 to 179 is DNA-binding; it reads TSSLTTEEML…WKKRKRMATD (65 aa).

The protein belongs to the HOP2 family.

The protein localises to the nucleus. Plays an important role in meiotic recombination. Stimulates DMC1-mediated strand exchange required for pairing of homologous chromosomes during meiosis. The sequence is that of Homologous-pairing protein 2 homolog (psmc3ip) from Xenopus laevis (African clawed frog).